The following is a 782-amino-acid chain: Chondroitin proteoglycan 4 (782 aa).

The N-terminal stretch at 1–18 (MRLVYSLIFLLFIPFSHP) is a signal peptide. N-linked (GlcNAc...) asparagine glycosylation is found at Asn-76, Asn-208, Asn-462, Asn-468, Asn-474, and Asn-503. The segment at 513–726 (ISEKSTEESS…EDQGSGNYKK (214 aa)) is disordered. Low complexity-rich tracts occupy residues 520–532 (ESSGSSGEMSGDG), 548–566 (SGSSGDNSGEFNSSGSSGE), 573–612 (SSGSEDQGSGNYKMIESIESSGEFSGSSGEGSGDTASSDT), 662–672 (FGESSGSSGES), and 688–722 (SGSSGDNSGDFNSSGSSGEASGVGESSGSEDQGSG). Residue Asn-559 is glycosylated (N-linked (GlcNAc...) asparagine). O-linked (Xyl...) (chondroitin sulfate) serine glycosylation occurs at Ser-691. Asn-699 is a glycosylation site (N-linked (GlcNAc...) asparagine). Residues Ser-701, Ser-704, Ser-708, Ser-714, and Ser-721 are each glycosylated (O-linked (Xyl...) (chondroitin sulfate) serine). Asn-743 carries N-linked (GlcNAc...) asparagine glycosylation.

The sequence is that of Chondroitin proteoglycan 4 from Caenorhabditis elegans.